The sequence spans 125 residues: Apolipoprotein C-IV (125 aa).

Residues 1–27 (MSLLRQRLQALPVLCLCVLVLACIGAC) form the signal peptide.

Belongs to the apolipoprotein C4 family.

It localises to the secreted. Its function is as follows. May participate in lipoprotein metabolism. The polypeptide is Apolipoprotein C-IV (APOC4) (Plecturocebus moloch (Dusky titi monkey)).